The primary structure comprises 619 residues: DNA mismatch repair protein MutL (619 aa).

It belongs to the DNA mismatch repair MutL/HexB family.

In terms of biological role, this protein is involved in the repair of mismatches in DNA. It is required for dam-dependent methyl-directed DNA mismatch repair. May act as a 'molecular matchmaker', a protein that promotes the formation of a stable complex between two or more DNA-binding proteins in an ATP-dependent manner without itself being part of a final effector complex. In Xylella fastidiosa (strain 9a5c), this protein is DNA mismatch repair protein MutL.